The primary structure comprises 26 residues: Omega-conotoxin TVIA (26 aa).

Cystine bridges form between Cys1-Cys16, Cys8-Cys19, and Cys15-Cys26. 4-hydroxyproline occurs at positions 4, 10, and 21.

It belongs to the conotoxin O1 superfamily. Expressed by the venom duct.

It is found in the secreted. Functionally, omega-conotoxins act at presynaptic membranes, they bind and block voltage-gated calcium channels (Cav). The sequence is that of Omega-conotoxin TVIA from Conus tulipa (Fish-hunting cone snail).